A 354-amino-acid polypeptide reads, in one-letter code: Putrescine/cadaverine-binding protein (354 aa).

Positions 1–20 (MMKKLLLVATLMAGAAQATA) are cleaved as a signal peptide.

The protein belongs to the bacterial solute-binding protein 1 family.

It is found in the periplasm. In terms of biological role, binds putrescine and cadaverine. The protein is Putrescine/cadaverine-binding protein of Pseudomonas aeruginosa (strain ATCC 15692 / DSM 22644 / CIP 104116 / JCM 14847 / LMG 12228 / 1C / PRS 101 / PAO1).